A 245-amino-acid chain; its full sequence is Probable transcriptional regulatory protein MARTH_orf271 (245 aa).

The protein belongs to the TACO1 family.

It is found in the cytoplasm. In Metamycoplasma arthritidis (strain 158L3-1) (Mycoplasma arthritidis), this protein is Probable transcriptional regulatory protein MARTH_orf271.